The primary structure comprises 288 residues: Rhox homeobox family member 2 (288 aa).

The tract at residues 16-136 is disordered; it reads SPAVDDEKEL…GLEPGNAQQP (121 aa). The span at 39–48 shows a compositional bias: acidic residues; sequence VKEEEEDAQP. The span at 68–80 shows a compositional bias: basic and acidic residues; that stretch reads GEEKDGGGEEKDG. The homeobox DNA-binding region spans 134 to 193; the sequence is QQPNVHAFTPLQLQELERIFQREQFPSEFLRRRLARSMNVTELAVQIWFENRRAKWRRHQ. Positions 186-195 match the Nuclear localization signal motif; the sequence is RAKWRRHQRA.

It belongs to the paired-like homeobox family. PEPP subfamily. In terms of tissue distribution, testis. Not detected in epididymis nor placenta. In testis, mainly expressed in germ cells, but also detected in somatic cells such as Sertoli cells, Leydig cells and peritubular cells.

Its subcellular location is the nucleus. Transcription factor maybe involved in reproductive processes. Modulates expression of target genes encoding proteins involved in processes relevant to spermatogenesis. The polypeptide is Rhox homeobox family member 2 (Homo sapiens (Human)).